Reading from the N-terminus, the 82-residue chain is Turripeptide IX-04 (82 aa).

Positions 1 to 21 (MGFYMLLTVALLLTSLMNVEA) are cleaved as a signal peptide. Residues 22–39 (TPVDQAERSALEKSGLGN) constitute a propeptide that is removed on maturation. Disulfide bonds link Cys48–Cys70, Cys55–Cys74, and Cys60–Cys81.

Expressed by the venom duct.

The protein resides in the secreted. This chain is Turripeptide IX-04, found in Gemmula speciosa (Splendid gem-turris).